A 132-amino-acid polypeptide reads, in one-letter code: Small integral membrane protein 33 (132 aa).

Positions 1-28 are disordered; sequence MHQAGHYSWPSPAVNSSSEQEPQRQLPE. Asn-15 carries an N-linked (GlcNAc...) asparagine glycan. A helical membrane pass occupies residues 43–63; it reads PVVTVIVAVFVLLAVCIIVAV. The segment at 99-132 is disordered; that stretch reads PQDSPEEAPPGPLVPGSCPAPDGPRPSIDEVTCL.

It is found in the membrane. This is Small integral membrane protein 33 from Homo sapiens (Human).